We begin with the raw amino-acid sequence, 1390 residues long: DNA-directed RNA polymerase subunit beta (1390 aa).

Belongs to the RNA polymerase beta chain family. In terms of assembly, the RNAP catalytic core consists of 2 alpha, 1 beta, 1 beta' and 1 omega subunit. When a sigma factor is associated with the core the holoenzyme is formed, which can initiate transcription.

The enzyme catalyses RNA(n) + a ribonucleoside 5'-triphosphate = RNA(n+1) + diphosphate. DNA-dependent RNA polymerase catalyzes the transcription of DNA into RNA using the four ribonucleoside triphosphates as substrates. This is DNA-directed RNA polymerase subunit beta from Gluconobacter oxydans (strain 621H) (Gluconobacter suboxydans).